The primary structure comprises 438 residues: Coenzyme A disulfide reductase (438 aa).

8–33 (GAVAGGATCASQIRRLDKESDIIIFE) contributes to the FAD binding site. Residues threonine 15, glutamine 19, arginine 22, serine 39, and asparagine 42 each contribute to the substrate site. The active-site Nucleophile is the cysteine 43. Residue cysteine 43 is the Redox-active of the active site. Lysine 71 contacts substrate. 151-166 (VLVVGAGYVSLEVLEN) is a binding site for NADP(+). 267 to 277 (TNVPNIYAIGD) provides a ligand contact to FAD. Histidine 299 serves as a coordination point for substrate. Tyrosine 419 contributes to the FAD binding site. A substrate-binding site is contributed by lysine 427.

This sequence belongs to the class-III pyridine nucleotide-disulfide oxidoreductase family. In terms of assembly, homodimer. It depends on FAD as a cofactor.

It catalyses the reaction NADP(+) + 2 CoA = CoA-disulfide + NADPH + H(+). Catalyzes specifically the NADPH-dependent reduction of coenzyme A disulfide. This Staphylococcus aureus (strain MSSA476) protein is Coenzyme A disulfide reductase.